The primary structure comprises 199 residues: Recombination protein RecR (199 aa).

Residues 58–73 (CKKCFNLTSEDECEIC) form a C4-type zinc finger. The Toprim domain occupies 81–175 (KLICVVSETK…KVTRIAYGLP (95 aa)).

It belongs to the RecR family.

Functionally, may play a role in DNA repair. It seems to be involved in an RecBC-independent recombinational process of DNA repair. It may act with RecF and RecO. The polypeptide is Recombination protein RecR (Prochlorococcus marinus (strain AS9601)).